The primary structure comprises 427 residues: Putative dipeptidase MCYG_02918 (427 aa).

The signal sequence occupies residues 1 to 29 (MAPERRSRLSDAGILVSLLALTSLVPVQA). Zn(2+) contacts are provided by histidine 55, aspartate 57, and glutamate 167. A disulfide bond links cysteine 106 and cysteine 196. Histidine 194 is a substrate binding site. Histidine 238 and histidine 259 together coordinate Zn(2+). Substrate-binding residues include arginine 270 and aspartate 330. N-linked (GlcNAc...) asparagine glycosylation occurs at asparagine 402.

This sequence belongs to the metallo-dependent hydrolases superfamily. Peptidase M19 family. The cofactor is Zn(2+).

It catalyses the reaction an L-aminoacyl-L-amino acid + H2O = 2 an L-alpha-amino acid. Its function is as follows. Hydrolyzes a wide range of dipeptides. The sequence is that of Putative dipeptidase MCYG_02918 from Arthroderma otae (strain ATCC MYA-4605 / CBS 113480) (Microsporum canis).